A 119-amino-acid chain; its full sequence is Holo-[acyl-carrier-protein] synthase (119 aa).

The Mg(2+) site is built by D8 and E58.

It belongs to the P-Pant transferase superfamily. AcpS family. Requires Mg(2+) as cofactor.

The protein resides in the cytoplasm. The catalysed reaction is apo-[ACP] + CoA = holo-[ACP] + adenosine 3',5'-bisphosphate + H(+). In terms of biological role, transfers the 4'-phosphopantetheine moiety from coenzyme A to a Ser of acyl-carrier-protein. The sequence is that of Holo-[acyl-carrier-protein] synthase from Bacillus cereus (strain B4264).